Here is a 379-residue protein sequence, read N- to C-terminus: tRNA(Met) cytidine acetate ligase (379 aa).

ATP is bound by residues 7 to 20 (ITEYNPFHNGHQYH), glycine 100, asparagine 153, and arginine 178.

The protein belongs to the TmcAL family.

It is found in the cytoplasm. It catalyses the reaction cytidine(34) in elongator tRNA(Met) + acetate + ATP = N(4)-acetylcytidine(34) in elongator tRNA(Met) + AMP + diphosphate. Functionally, catalyzes the formation of N(4)-acetylcytidine (ac(4)C) at the wobble position of elongator tRNA(Met), using acetate and ATP as substrates. First activates an acetate ion to form acetyladenylate (Ac-AMP) and then transfers the acetyl group to tRNA to form ac(4)C34. The sequence is that of tRNA(Met) cytidine acetate ligase from Staphylococcus aureus (strain MRSA252).